A 231-amino-acid polypeptide reads, in one-letter code: Fibrillarin-like rRNA/tRNA 2'-O-methyltransferase (231 aa).

Residues 89–90 (TT), 108–109 (EF), 133–134 (DA), and 153–156 (DIAQ) each bind S-adenosyl-L-methionine.

The protein belongs to the methyltransferase superfamily. Fibrillarin family. As to quaternary structure, interacts with nop5. Component of box C/D small ribonucleoprotein (sRNP) particles that contain rpl7ae, FlpA and nop5, plus a guide RNA.

Its function is as follows. Involved in pre-rRNA and tRNA processing. Utilizes the methyl donor S-adenosyl-L-methionine to catalyze the site-specific 2'-hydroxyl methylation of ribose moieties in rRNA and tRNA. Site specificity is provided by a guide RNA that base pairs with the substrate. Methylation occurs at a characteristic distance from the sequence involved in base pairing with the guide RNA. In Sulfolobus acidocaldarius (strain ATCC 33909 / DSM 639 / JCM 8929 / NBRC 15157 / NCIMB 11770), this protein is Fibrillarin-like rRNA/tRNA 2'-O-methyltransferase.